The sequence spans 525 residues: Glutamate synthase large subunit-like protein YerD (525 aa).

Residues 4 to 24 traverse the membrane as a helical segment; that stretch reads IIIALIAFIIGIIAIPIVLFA.

The protein belongs to the glutamate synthase family.

It localises to the cell membrane. This is Glutamate synthase large subunit-like protein YerD (yerD) from Bacillus subtilis (strain 168).